A 489-amino-acid polypeptide reads, in one-letter code: MNELRKLSITQMHDGLKKKSFSAVELVEAHISAVENEKLNAFITKTPEIAMKAAKAADEHFSRQKDDLISPLMGVPVGIKDLFCTKGIKTTACSKMLENFVPTYESTVSDLLLKSGAAMLGKLNMDEFAMGSANTNSYFGPVENVWIRKSDGEKVVPGGSSGGSAASVAGFLCAGALGSDTGGSVRQPAAYCGVVGIKPTYGRCSRFGMIAFASSLDQAGVITRSVSDSALMLEAICGYDTKDSISSEKPVPKFSSFINGDVKGKRIGIPKEYRMDGISEEIVHNWEKVASYLKENGAEVVDVTLPHTKYAIPVYYLICSAETSSNLARYDGVRYGFRVDADTLEEMYSLTRAEGFGKEVKRRILIGAYALSSGHYNEYYEKAQCIRALIRNDFIKAFEKIDYILVPSAPTEAFGLNEKPDPLIMCINDVFTVPASLAGLPAISVPVGLSNEGLPLALQVIGNYYDEAGILNVASVIEQNCGRIIRPLA.

Catalysis depends on charge relay system residues Lys-80 and Ser-160. Ser-184 acts as the Acyl-ester intermediate in catalysis.

It belongs to the amidase family. GatA subfamily. In terms of assembly, heterotrimer of A, B and C subunits.

The enzyme catalyses L-glutamyl-tRNA(Gln) + L-glutamine + ATP + H2O = L-glutaminyl-tRNA(Gln) + L-glutamate + ADP + phosphate + H(+). Its function is as follows. Allows the formation of correctly charged Gln-tRNA(Gln) through the transamidation of misacylated Glu-tRNA(Gln) in organisms which lack glutaminyl-tRNA synthetase. The reaction takes place in the presence of glutamine and ATP through an activated gamma-phospho-Glu-tRNA(Gln). The chain is Glutamyl-tRNA(Gln) amidotransferase subunit A from Wolbachia pipientis wMel.